Reading from the N-terminus, the 599-residue chain is uncharacterized protein (599 aa).

A compositionally biased stretch (low complexity) spans 1-13; that stretch reads MSSSSSHNSFSGS. 2 disordered regions span residues 1-27 and 41-86; these read MSSS…IDGL and YPSN…DDTN. The segment covering 14 to 27 has biased composition (polar residues); that stretch reads KTNAAEGQNSIDGL. Basic and acidic residues predominate over residues 44 to 70; it reads NEEKEVKETDIVPDENKVNELDVHKQS. Transmembrane regions (helical) follow at residues 97-117, 135-155, 162-182, 192-212, 223-243, 251-271, 290-310, 321-341, 359-379, 396-416, 423-443, 452-472, 489-509, and 552-572; these read IVVP…TIVT, WIGS…GVFC, IVLY…GASQ, AIQG…ISDI, GILA…GGAI, WIFF…VVFL, FIGL…ISLG, ILCY…YDTF, AALL…AYYV, VHTI…GMVL, LPLI…MICV, VMGL…PPLI, TLMF…EVIF, and VIWI…FFIK.

Belongs to the major facilitator superfamily. TCR/Tet family.

It localises to the membrane. This is an uncharacterized protein from Schizosaccharomyces pombe (strain 972 / ATCC 24843) (Fission yeast).